The chain runs to 148 residues: MKMELKVKPIENGTVIDHISGSKALKVYKILNIEEKLPMTIALNVPSKKGVMKDILKIEGLELTKEDVNKIALISPDATINIIKEGIVIKKFKVDLPKRIDGIIKCTNPNCITNKENIDGKFSIEQKNTLKIRCEYCEKFINSIIISK.

The Zn(2+) site is built by C106, C111, C134, and C137.

This sequence belongs to the PyrI family. Contains catalytic and regulatory chains. The cofactor is Zn(2+).

Functionally, involved in allosteric regulation of aspartate carbamoyltransferase. The sequence is that of Aspartate carbamoyltransferase regulatory chain from Methanococcus maripaludis (strain C7 / ATCC BAA-1331).